Consider the following 301-residue polypeptide: tRNA pseudouridine synthase B (301 aa).

The active-site Nucleophile is the aspartate 38.

This sequence belongs to the pseudouridine synthase TruB family. Type 1 subfamily.

The enzyme catalyses uridine(55) in tRNA = pseudouridine(55) in tRNA. In terms of biological role, responsible for synthesis of pseudouridine from uracil-55 in the psi GC loop of transfer RNAs. The sequence is that of tRNA pseudouridine synthase B from Ehrlichia canis (strain Jake).